The chain runs to 237 residues: Phosphoribosylaminoimidazole-succinocarboxamide synthase (237 aa).

It belongs to the SAICAR synthetase family.

The enzyme catalyses 5-amino-1-(5-phospho-D-ribosyl)imidazole-4-carboxylate + L-aspartate + ATP = (2S)-2-[5-amino-1-(5-phospho-beta-D-ribosyl)imidazole-4-carboxamido]succinate + ADP + phosphate + 2 H(+). The protein operates within purine metabolism; IMP biosynthesis via de novo pathway; 5-amino-1-(5-phospho-D-ribosyl)imidazole-4-carboxamide from 5-amino-1-(5-phospho-D-ribosyl)imidazole-4-carboxylate: step 1/2. The protein is Phosphoribosylaminoimidazole-succinocarboxamide synthase of Methanosarcina mazei (strain ATCC BAA-159 / DSM 3647 / Goe1 / Go1 / JCM 11833 / OCM 88) (Methanosarcina frisia).